Reading from the N-terminus, the 131-residue chain is Ribosome-binding factor A (131 aa).

The protein belongs to the RbfA family. In terms of assembly, monomer. Binds 30S ribosomal subunits, but not 50S ribosomal subunits or 70S ribosomes.

It is found in the cytoplasm. One of several proteins that assist in the late maturation steps of the functional core of the 30S ribosomal subunit. Associates with free 30S ribosomal subunits (but not with 30S subunits that are part of 70S ribosomes or polysomes). Required for efficient processing of 16S rRNA. May interact with the 5'-terminal helix region of 16S rRNA. The sequence is that of Ribosome-binding factor A from Ruegeria sp. (strain TM1040) (Silicibacter sp.).